Here is a 385-residue protein sequence, read N- to C-terminus: 8-amino-7-oxononanoate synthase (385 aa).

Arginine 21 lines the substrate pocket. 108-109 lines the pyridoxal 5'-phosphate pocket; that stretch reads GF. Position 133 (histidine 133) interacts with substrate. Pyridoxal 5'-phosphate is bound by residues serine 179, histidine 207, and threonine 233. N6-(pyridoxal phosphate)lysine is present on lysine 236. Threonine 352 is a substrate binding site.

It belongs to the class-II pyridoxal-phosphate-dependent aminotransferase family. BioF subfamily. Homodimer. The cofactor is pyridoxal 5'-phosphate.

The catalysed reaction is 6-carboxyhexanoyl-[ACP] + L-alanine + H(+) = (8S)-8-amino-7-oxononanoate + holo-[ACP] + CO2. It participates in cofactor biosynthesis; biotin biosynthesis. Its function is as follows. Catalyzes the decarboxylative condensation of pimeloyl-[acyl-carrier protein] and L-alanine to produce 8-amino-7-oxononanoate (AON), [acyl-carrier protein], and carbon dioxide. This chain is 8-amino-7-oxononanoate synthase, found in Salmonella enteritidis PT4 (strain P125109).